The chain runs to 166 residues: Crossover junction endodeoxyribonuclease RuvC (166 aa).

Catalysis depends on residues Asp-7, Glu-67, and Asp-139. Asp-7, Glu-67, and Asp-139 together coordinate Mg(2+).

It belongs to the RuvC family. In terms of assembly, homodimer which binds Holliday junction (HJ) DNA. The HJ becomes 2-fold symmetrical on binding to RuvC with unstacked arms; it has a different conformation from HJ DNA in complex with RuvA. In the full resolvosome a probable DNA-RuvA(4)-RuvB(12)-RuvC(2) complex forms which resolves the HJ. It depends on Mg(2+) as a cofactor.

Its subcellular location is the cytoplasm. It catalyses the reaction Endonucleolytic cleavage at a junction such as a reciprocal single-stranded crossover between two homologous DNA duplexes (Holliday junction).. In terms of biological role, the RuvA-RuvB-RuvC complex processes Holliday junction (HJ) DNA during genetic recombination and DNA repair. Endonuclease that resolves HJ intermediates. Cleaves cruciform DNA by making single-stranded nicks across the HJ at symmetrical positions within the homologous arms, yielding a 5'-phosphate and a 3'-hydroxyl group; requires a central core of homology in the junction. The consensus cleavage sequence is 5'-(A/T)TT(C/G)-3'. Cleavage occurs on the 3'-side of the TT dinucleotide at the point of strand exchange. HJ branch migration catalyzed by RuvA-RuvB allows RuvC to scan DNA until it finds its consensus sequence, where it cleaves and resolves the cruciform DNA. This Paramagnetospirillum magneticum (strain ATCC 700264 / AMB-1) (Magnetospirillum magneticum) protein is Crossover junction endodeoxyribonuclease RuvC.